A 389-amino-acid polypeptide reads, in one-letter code: S-adenosylmethionine synthase (389 aa).

His-17 provides a ligand contact to ATP. Mg(2+) is bound at residue Asp-19. Glu-45 is a K(+) binding site. L-methionine-binding residues include Glu-58 and Gln-101. A flexible loop region spans residues 101–111; the sequence is QSPDISQGVTE. Residues 168–170, 234–235, Asp-243, 249–250, Ala-266, and Lys-270 contribute to the ATP site; these read DSK, RF, and RK. Asp-243 lines the L-methionine pocket. Position 274 (Lys-274) interacts with L-methionine.

This sequence belongs to the AdoMet synthase family. As to quaternary structure, homotetramer; dimer of dimers. The cofactor is Mg(2+). It depends on K(+) as a cofactor.

It is found in the cytoplasm. The catalysed reaction is L-methionine + ATP + H2O = S-adenosyl-L-methionine + phosphate + diphosphate. It functions in the pathway amino-acid biosynthesis; S-adenosyl-L-methionine biosynthesis; S-adenosyl-L-methionine from L-methionine: step 1/1. Catalyzes the formation of S-adenosylmethionine (AdoMet) from methionine and ATP. The overall synthetic reaction is composed of two sequential steps, AdoMet formation and the subsequent tripolyphosphate hydrolysis which occurs prior to release of AdoMet from the enzyme. The polypeptide is S-adenosylmethionine synthase (Geobacter sulfurreducens (strain ATCC 51573 / DSM 12127 / PCA)).